The primary structure comprises 375 residues: 2-methylcitrate synthase (375 aa).

K72 and H187 together coordinate substrate. H222 is an active-site residue. Residue 255 to 259 participates in CoA binding; that stretch reads KIMGF. The active site involves H261. R270 serves as a coordination point for substrate. D312 is an active-site residue. R337 and R356 together coordinate substrate.

It belongs to the citrate synthase family. As to quaternary structure, homodimer.

It catalyses the reaction propanoyl-CoA + oxaloacetate + H2O = (2S,3S)-2-methylcitrate + CoA + H(+). The enzyme catalyses oxaloacetate + acetyl-CoA + H2O = citrate + CoA + H(+). Its pathway is organic acid metabolism; propanoate degradation. The protein operates within carbohydrate metabolism; tricarboxylic acid cycle; isocitrate from oxaloacetate: step 1/2. Functionally, involved in the catabolism of short chain fatty acids (SCFA) via the tricarboxylic acid (TCA)(acetyl degradation route) and via the 2-methylcitrate cycle II (propionate degradation route). Catalyzes the Claisen condensation of propionyl-CoA and oxaloacetate (OAA) to yield 2-methylcitrate (2-MC) and CoA. Catalyzes the condensation of oxaloacetate with acetyl-CoA. This chain is 2-methylcitrate synthase (prpC), found in Shewanella oneidensis (strain ATCC 700550 / JCM 31522 / CIP 106686 / LMG 19005 / NCIMB 14063 / MR-1).